The following is a 132-amino-acid chain: CLAVATA3/ESR (CLE)-related protein ESR2 (132 aa).

An N-terminal signal peptide occupies residues 1-26 (MASRMGMVAIVSLFVCALVASTSVNA). The disordered stretch occupies residues 68-132 (NRASKQLDSE…IGPPPFLDRY (65 aa)). Hydroxyproline occurs at positions 82 and 85. Pro-85 carries an O-linked (Ara...) hydroxyproline glycan. Positions 123 to 132 (IGPPPFLDRY) are enriched in pro residues.

It belongs to the CLV3/ESR signal peptide family. The O-glycosylation (arabinosylation) of the hydroxyproline Pro-85 enhances binding affinity of the ESR2p peptide for its receptor. As to expression, seed endosperm.

The protein resides in the secreted. The protein localises to the extracellular space. In terms of biological role, extracellular signal peptide that regulates cell fate. The sequence is that of CLAVATA3/ESR (CLE)-related protein ESR2 from Zea mays (Maize).